The sequence spans 333 residues: Probable siderophore transport system permease protein YfiZ (333 aa).

The first 31 residues, 1 to 31, serve as a signal peptide directing secretion; that stretch reads MICKKASSKWIVLVCLIFILLTAVCASVVYG. 8 consecutive transmembrane segments (helical) span residues 64–84, 94–114, 119–139, 152–172, 193–213, 246–266, 280–300, and 303–323; these read ALVATVVGASLAAAGALMQAL, IFGINAGAGFFIVAGSFFLHI, ALVWSSFLGAAFTAAIVYAAG, TLAGAAMAAMFSSLTQGLLSV, LDLLMTMFPYAAAALVICFFL, VMLAGSAVAIAGPISFIGIII, WVLPFSAVLGAILLVCADIGA, and IIMPQEVPVGVMTAIIGMPVF.

It belongs to the binding-protein-dependent transport system permease family. FecCD subfamily. In terms of assembly, the complex is composed of one ATP-binding protein (YusV), two transmembrane proteins (YfiZ and YfhA) and a solute-binding protein (YfiY).

It is found in the cell membrane. In terms of biological role, part of the ABC transporter complex YfiYZ/YfhA/YusV involved in import of the iron-hydroxamate siderophores schizokinen, arthrobactin and corprogen. This Bacillus subtilis (strain 168) protein is Probable siderophore transport system permease protein YfiZ (yfiZ).